The sequence spans 101 residues: Small ubiquitin-related modifier 1 (101 aa).

Serine 2 is modified (N-acetylserine). A Phosphoserine modification is found at serine 2. Lysine 7 participates in a covalent cross-link: Glycyl lysine isopeptide (Lys-Gly) (interchain with G-Cter in SUMO1); alternate. Lysine 7 is covalently cross-linked (Glycyl lysine isopeptide (Lys-Gly) (interchain with G-Cter in SUMO2); alternate). A Phosphoserine modification is found at serine 9. Glycyl lysine isopeptide (Lys-Gly) (interchain with G-Cter in SUMO2) cross-links involve residues lysine 16, lysine 17, and lysine 23. In terms of domain architecture, Ubiquitin-like spans 20–97; the sequence is EYIKLKVIGQ…IEVYQEQTGG (78 aa). Lysine 25 is covalently cross-linked (Glycyl lysine isopeptide (Lys-Gly) (interchain with G-Cter in SUMO1)). Serine 32 carries the post-translational modification Phosphoserine. Glycyl lysine isopeptide (Lys-Gly) (interchain with G-Cter in SUMO2) cross-links involve residues lysine 37, lysine 39, lysine 45, and lysine 46. Glycine 97 participates in a covalent cross-link: Glycyl lysine isopeptide (Gly-Lys) (interchain with K-? in acceptor proteins). The propeptide occupies 98-101; it reads HSNV.

Belongs to the ubiquitin family. SUMO subfamily. Covalently attached to KCNB1; UBE2I increases cross-linking with KCNB1 and PIAS1 decreases cross-links with KCNB1. Interacts with SAE2, RANBP2, PIAS1 and PIAS2. Interacts with PRKN. Covalently attached to a number of proteins such as IKFZ1, PML, RANGAP1, HIPK2, SP100, p53, p73-alpha, MDM2, JUN, DNMT3B and TDG. Also interacts with HIF1A, HIPK2, HIPK3, CHD3, EXOSC9, RAD51 and RAD52. Interacts with USP25 (via ts SIM domain); the interaction weakly sumoylates USP25. Interacts with SIMC1, CASP8AP2, RNF111 and SOBP (via SIM domains). Interacts with BHLHE40/DEC1. Interacts with RWDD3. Interacts with UBE2I/UBC9 and this interaction is enhanced in the presence of RWDD3. Interacts with MTA1. Interacts with SENP2. Interacts with HINT1. Cleavage of precursor form by SENP1 or SENP2 is necessary for function. In terms of processing, polymeric SUMO1 chains undergo polyubiquitination by RNF4.

Its subcellular location is the nucleus membrane. The protein localises to the nucleus speckle. It localises to the cytoplasm. The protein resides in the nucleus. It is found in the PML body. Its subcellular location is the cell membrane. Its function is as follows. Ubiquitin-like protein that can be covalently attached to proteins as a monomer or a lysine-linked polymer. Covalent attachment via an isopeptide bond to its substrates requires prior activation by the E1 complex SAE1-SAE2 and linkage to the E2 enzyme UBE2I, and can be promoted by E3 ligases such as PIAS1-4, RANBP2 or CBX4. This post-translational modification on lysine residues of proteins plays a crucial role in a number of cellular processes such as nuclear transport, DNA replication and repair, mitosis and signal transduction. Involved for instance in targeting RANGAP1 to the nuclear pore complex protein RANBP2. Covalently attached to the voltage-gated potassium channel KCNB1; this modulates the gating characteristics of KCNB1. Polymeric SUMO1 chains are also susceptible to polyubiquitination which functions as a signal for proteasomal degradation of modified proteins. May be involved in modified proteins. May also regulate a network of genes involved in palate development. Covalently attached to ZFHX3. In Ictidomys tridecemlineatus (Thirteen-lined ground squirrel), this protein is Small ubiquitin-related modifier 1 (SUMO1).